A 215-amino-acid polypeptide reads, in one-letter code: Pyridoxine/pyridoxamine 5'-phosphate oxidase (215 aa).

Substrate is bound by residues 8–11 (RQEY) and Lys-66. FMN contacts are provided by residues 61–66 (RIVLLK), 76–77 (YT), Arg-82, Lys-83, and Gln-105. Substrate contacts are provided by Tyr-123 and Arg-127. FMN-binding positions include 140–141 (QS) and Trp-186. 192–194 (RLH) contacts substrate. FMN is bound at residue Arg-196.

This sequence belongs to the pyridoxamine 5'-phosphate oxidase family. Homodimer. It depends on FMN as a cofactor.

The catalysed reaction is pyridoxamine 5'-phosphate + O2 + H2O = pyridoxal 5'-phosphate + H2O2 + NH4(+). The enzyme catalyses pyridoxine 5'-phosphate + O2 = pyridoxal 5'-phosphate + H2O2. It participates in cofactor metabolism; pyridoxal 5'-phosphate salvage; pyridoxal 5'-phosphate from pyridoxamine 5'-phosphate: step 1/1. It functions in the pathway cofactor metabolism; pyridoxal 5'-phosphate salvage; pyridoxal 5'-phosphate from pyridoxine 5'-phosphate: step 1/1. Functionally, catalyzes the oxidation of either pyridoxine 5'-phosphate (PNP) or pyridoxamine 5'-phosphate (PMP) into pyridoxal 5'-phosphate (PLP). The chain is Pyridoxine/pyridoxamine 5'-phosphate oxidase from Salinibacter ruber (strain DSM 13855 / M31).